Reading from the N-terminus, the 416-residue chain is Probable glucan 1,3-beta-glucosidase A (416 aa).

An N-terminal signal peptide occupies residues 1–22 (MFVESAKKALLALSLLAASAQA). N183 is a glycosylation site (N-linked (GlcNAc...) asparagine). E210 (proton donor) is an active-site residue. 2 disulfide bridges follow: C290/C415 and C316/C342. The Nucleophile role is filled by E308.

It belongs to the glycosyl hydrolase 5 (cellulase A) family. As to quaternary structure, monomer. Mn(2+) serves as cofactor.

The protein resides in the secreted. It carries out the reaction Successive hydrolysis of beta-D-glucose units from the non-reducing ends of (1-&gt;3)-beta-D-glucans, releasing alpha-glucose.. In terms of biological role, beta-glucanases participate in the metabolism of beta-glucan, the main structural component of the cell wall. It could also function biosynthetically as a transglycosylase. The polypeptide is Probable glucan 1,3-beta-glucosidase A (exgA) (Aspergillus niger (strain ATCC MYA-4892 / CBS 513.88 / FGSC A1513)).